The chain runs to 178 residues: Inorganic pyrophosphatase (178 aa).

Substrate is bound by residues Lys30, Arg44, and Tyr56. Mg(2+)-binding residues include Asp66, Asp71, and Asp103. Tyr140 contacts substrate.

Belongs to the PPase family. Homohexamer. Mg(2+) is required as a cofactor.

It localises to the cytoplasm. It catalyses the reaction diphosphate + H2O = 2 phosphate + H(+). Functionally, catalyzes the hydrolysis of inorganic pyrophosphate (PPi) forming two phosphate ions. This Pyrococcus horikoshii (strain ATCC 700860 / DSM 12428 / JCM 9974 / NBRC 100139 / OT-3) protein is Inorganic pyrophosphatase.